A 156-amino-acid chain; its full sequence is MTKMNVESFNLDHTKVVAPFVRLAGTMEGLNGDVIKKYDIRFKQPNKEHMEMPGLHSLEHLMAENIRNHTDKVVDLSPMGCQTGFYVSFINHDDYEDVLNIIEKTLNDVLEATEVPACNEVQCGWAASHSLEGAKEIAQAFLDKRNQWSDIFGEGK.

Positions 56, 60, and 123 each coordinate Fe cation.

Belongs to the LuxS family. As to quaternary structure, homodimer. It depends on Fe cation as a cofactor.

It carries out the reaction S-(5-deoxy-D-ribos-5-yl)-L-homocysteine = (S)-4,5-dihydroxypentane-2,3-dione + L-homocysteine. In terms of biological role, involved in the synthesis of autoinducer 2 (AI-2) which is secreted by bacteria and is used to communicate both the cell density and the metabolic potential of the environment. The regulation of gene expression in response to changes in cell density is called quorum sensing. Catalyzes the transformation of S-ribosylhomocysteine (RHC) to homocysteine (HC) and 4,5-dihydroxy-2,3-pentadione (DPD). The protein is S-ribosylhomocysteine lyase of Staphylococcus haemolyticus (strain JCSC1435).